A 503-amino-acid chain; its full sequence is AMP phosphorylase (503 aa).

AMP contacts are provided by residues glycine 168, 194–199 (SRAITS), and threonine 203. Catalysis depends on aspartate 256, which acts as the Proton donor. The AMP site is built by serine 264 and lysine 288.

This sequence belongs to the thymidine/pyrimidine-nucleoside phosphorylase family. Type 2 subfamily. Forms an exceptionally large macromolecular structure (&gt;40-mers) in solution.

It carries out the reaction AMP + phosphate = alpha-D-ribose 1,5-bisphosphate + adenine. The catalysed reaction is CMP + phosphate = cytosine + alpha-D-ribose 1,5-bisphosphate. The enzyme catalyses UMP + phosphate = alpha-D-ribose 1,5-bisphosphate + uracil. With respect to regulation, AMP phosphorolysis is allosterically regulated by the substrate AMP. In terms of biological role, catalyzes the conversion of AMP and phosphate to adenine and ribose 1,5-bisphosphate (R15P). Exhibits phosphorylase activity toward CMP, dCMP and UMP in addition to AMP. Functions in an archaeal AMP degradation pathway, together with R15P isomerase and RubisCO. The sequence is that of AMP phosphorylase from Thermococcus kodakarensis (strain ATCC BAA-918 / JCM 12380 / KOD1) (Pyrococcus kodakaraensis (strain KOD1)).